A 423-amino-acid polypeptide reads, in one-letter code: Tumor necrosis factor receptor superfamily member 19 (423 aa).

The signal sequence occupies residues 1-29; it reads MALKVLLEQEKTFFTLLVLLGYLSCKVTC. Over 30–170 the chain is Extracellular; sequence ESGDCRQQEF…TASSPRDTAL (141 aa). TNFR-Cys repeat units follow at residues 33–72, 74–114, and 116–149; these read DCRQQEFRDRSGNCVPCNQCGPGMELSKECGFGYGEDAQC, TCRL…DAIC, and DCLPGFYRKTKLVGFQDMECVPCGDPPPPYEPHC. 8 disulfides stabilise this stretch: cysteine 34–cysteine 46, cysteine 49–cysteine 62, cysteine 52–cysteine 72, cysteine 75–cysteine 89, cysteine 92–cysteine 106, cysteine 95–cysteine 114, cysteine 117–cysteine 135, and cysteine 138–cysteine 149. Asparagine 105 is a glycosylation site (N-linked (GlcNAc...) asparagine). Residues 171–191 form a helical membrane-spanning segment; the sequence is AAVICSALATVLLALLILCVI. The Cytoplasmic segment spans residues 192 to 423; it reads YCKRQFMEKK…LQVRQRLGSL (232 aa).

Associates with TRAF1, TRAF2, TRAF3 and TRAF5. Interacts with LINGO1. As to expression, highly expressed in prostate. Detected at lower levels in thymus, spleen, testis, uterus, small intestine, colon and peripheral blood leukocytes.

Its subcellular location is the membrane. Its function is as follows. Can mediate activation of JNK and NF-kappa-B. May promote caspase-independent cell death. The sequence is that of Tumor necrosis factor receptor superfamily member 19 (TNFRSF19) from Homo sapiens (Human).